The primary structure comprises 747 residues: Mitochondrial inner membrane i-AAA protease supercomplex subunit YME1 (747 aa).

Basic and acidic residues predominate over residues 51 to 64 (KNSGEMPPKKEADS). The tract at residues 51–92 (KNSGEMPPKKEADSSGKASNKSTISSIDNSQPPPPSNTNDKT) is disordered. The span at 66–80 (GKASNKSTISSIDNS) shows a compositional bias: polar residues. 321–328 (GPPGTGKT) lines the ATP pocket. A Zn(2+)-binding site is contributed by His540. Glu541 is an active-site residue. Positions 544 and 618 each coordinate Zn(2+). The tract at residues 718-747 (STNTVVEGPDSDERKDIGDDKPKIPTMLNA) is disordered. The span at 728 to 740 (SDERKDIGDDKPK) shows a compositional bias: basic and acidic residues.

In the N-terminal section; belongs to the AAA ATPase family. This sequence in the C-terminal section; belongs to the peptidase M41 family. Component of the mitochondrial inner membrane i-AAA protease supercomplex composed of MGR1, MGR3 and YME1. Interacts directly with MGR1. The cofactor is Zn(2+).

The protein localises to the mitochondrion inner membrane. Functionally, catalytic subunit of the mitochondrial inner membrane i-AAA protease supercomplex required for mitochondrial inner membrane protein turnover. The protease is probably ATP-dependent. Important to maintain the integrity of the mitochondrial compartment. Required both for the degradation of unassembled subunit 2 of cytochrome c oxidase (COX2) and for efficient assembly of mitochondrial respiratory chain. Binds unfolded substrates in an ATPase-independent manner; binding of folded COX2, a physiological substrate, requires an active ATPase but when COX2 is destabilized an active ATPase is no longer necessary. May process ATG32. The protein is Mitochondrial inner membrane i-AAA protease supercomplex subunit YME1 (YME1) of Saccharomyces cerevisiae (strain ATCC 204508 / S288c) (Baker's yeast).